The chain runs to 165 residues: Small ribosomal subunit protein eS10 (165 aa).

Residue Tyr-12 is modified to Phosphotyrosine. Residues 92-165 form a disordered region; it reads ATLRRSRPET…FGRGRGQPPQ (74 aa). Over residues 97-128 the composition is skewed to basic and acidic residues; it reads SRPETGRPRPKGLEGERPARLTRGEADRDTYR. Residues Lys-138 and Lys-139 each participate in a glycyl lysine isopeptide (Lys-Gly) (interchain with G-Cter in ubiquitin) cross-link. Ser-146 is subject to Phosphoserine. Arg-153 is modified (omega-N-methylarginine). Over residues 154-165 the composition is skewed to gly residues; that stretch reads GGFGRGRGQPPQ. Symmetric dimethylarginine occurs at positions 158 and 160.

This sequence belongs to the eukaryotic ribosomal protein eS10 family. As to quaternary structure, component of the small ribosomal subunit. The methylated form interacts with NPM1. Methylated by PRMT5. Methylation is necessary for its interaction with NPS1, its localization in the granular component (GC) region of the nucleolus, for the proper assembly of ribosomes, protein synthesis and optimal cell proliferation. Post-translationally, monoubiquitinated by ZNF598 when a ribosome has stalled during translation of poly(A) sequences, leading to preclude synthesis of a long poly-lysine tail and initiate the ribosome quality control (RQC) pathway to degrade the potentially detrimental aberrant nascent polypeptide. Deubiquitinated by OTUD3 and USP21, antagonizing ZNF598 activity. Deubiquitinated by OTUD1, antagonizing ZNF598 activity and stimulating formation of polysomes: deubiquitination by OTUD1 promotes stability and translation of a subset mRNAs with a high abundance of rare codons can limit the translation rate. Deubiquitinated by USP10.

The protein localises to the cytoplasm. The protein resides in the nucleus. It is found in the nucleolus. Component of the 40S ribosomal subunit. The ribosome is a large ribonucleoprotein complex responsible for the synthesis of proteins in the cell. This chain is Small ribosomal subunit protein eS10 (RPS10), found in Oryctolagus cuniculus (Rabbit).